Here is a 235-residue protein sequence, read N- to C-terminus: Thiamine import ATP-binding protein ThiQ (235 aa).

The ABC transporter domain occupies Leu2–Met230. Gly32–Ser39 provides a ligand contact to ATP.

It belongs to the ABC transporter superfamily. Thiamine importer (TC 3.A.1.19.1) family. The complex is composed of two ATP-binding proteins (ThiQ), two transmembrane proteins (ThiP) and a solute-binding protein (ThiB).

Its subcellular location is the cell inner membrane. The enzyme catalyses thiamine(out) + ATP + H2O = thiamine(in) + ADP + phosphate + H(+). Its function is as follows. Part of the ABC transporter complex ThiBPQ involved in thiamine import. Responsible for energy coupling to the transport system. This Photorhabdus laumondii subsp. laumondii (strain DSM 15139 / CIP 105565 / TT01) (Photorhabdus luminescens subsp. laumondii) protein is Thiamine import ATP-binding protein ThiQ.